We begin with the raw amino-acid sequence, 1001 residues long: Translation initiation factor IF-2 (1001 aa).

Positions 56 to 418 are disordered; sequence PDYVHDPNAV…VEAGPPPISR (363 aa). Over residues 70–84 the composition is skewed to basic and acidic residues; that stretch reads TEAHEERHEHEEAHE. Over residues 85–108 the composition is skewed to low complexity; the sequence is PAAAPKAAVEPETPVAPAPEAAPA. The span at 109-120 shows a compositional bias: basic and acidic residues; that stretch reads AKEERPAPEEPA. Composition is skewed to pro residues over residues 136 to 170, 180 to 194, 204 to 217, 229 to 252, 305 to 322, and 345 to 357; these read IHPPVGATPPPRPEGPRAAPAPPLPPPAPQVPHAP, PARPEPPAHHPPSQT, RPAPPSAKPLPTTT, QPFPSSPAPGAPQRPQAIPRPPQQ, PAAPRPGVPKAPSAPVPG, and GMPPSRPGGPRPQ. Residues 379–410 show a composition bias toward basic and acidic residues; it reads SRGRPGDRRPVRQQRERTEEEKILRPQRRHVE. In terms of domain architecture, tr-type G spans 499 to 668; the sequence is RRAPVVTIMG…LLVADMQDLK (170 aa). Residues 508–515 form a G1 region; that stretch reads GHVDHGKT. A GTP-binding site is contributed by 508 to 515; that stretch reads GHVDHGKT. The G2 stretch occupies residues 533-537; sequence GITQH. A G3 region spans residues 554–557; the sequence is DTPG. GTP contacts are provided by residues 554 to 558 and 608 to 611; these read DTPGH and NKID. A G4 region spans residues 608–611; it reads NKID. The G5 stretch occupies residues 644-646; sequence SAR.

The protein belongs to the TRAFAC class translation factor GTPase superfamily. Classic translation factor GTPase family. IF-2 subfamily.

It localises to the cytoplasm. Functionally, one of the essential components for the initiation of protein synthesis. Protects formylmethionyl-tRNA from spontaneous hydrolysis and promotes its binding to the 30S ribosomal subunits. Also involved in the hydrolysis of GTP during the formation of the 70S ribosomal complex. The chain is Translation initiation factor IF-2 from Solibacter usitatus (strain Ellin6076).